The chain runs to 216 residues: Glycerol-3-phosphate acyltransferase 3 (216 aa).

Helical transmembrane passes span 6-26 (LLLVVIVSYILGSIPFGYLVS), 58-78 (LVASLDVIKGASAVAFAGLVI), 92-112 (LLFAQVLAGLAAVAGHIWPVF), 125-145 (FGGMIALCPVAAIFGGEVLII), and 158-178 (ITGVVGAYALLVPLTLISGFP).

This sequence belongs to the PlsY family. Probably interacts with PlsX.

The protein localises to the cell membrane. It carries out the reaction an acyl phosphate + sn-glycerol 3-phosphate = a 1-acyl-sn-glycero-3-phosphate + phosphate. The protein operates within lipid metabolism; phospholipid metabolism. Its function is as follows. Catalyzes the transfer of an acyl group from acyl-phosphate (acyl-PO(4)) to glycerol-3-phosphate (G3P) to form lysophosphatidic acid (LPA). This enzyme utilizes acyl-phosphate as fatty acyl donor, but not acyl-CoA or acyl-ACP. This Dehalococcoides mccartyi (strain CBDB1) protein is Glycerol-3-phosphate acyltransferase 3.